The following is a 108-amino-acid chain: Hrp pili protein HrpA (108 aa).

The span at 41-56 (NTGSTDSIDATRSSIS) shows a compositional bias: polar residues. The tract at residues 41-72 (NTGSTDSIDATRSSISKGDAKSAELDGTANEE) is disordered.

It belongs to the HrpA type 1 family.

It is found in the secreted. The protein localises to the fimbrium. Major structural protein of the hrp pilus, which is a component of the type III secretion system (T3SS, Hrp secretion system) required for effector protein delivery, parasitism, and pathogenicity. The hrp pilus functions as a conduit for protein delivery into the host cell. Also, affects the expression of T3SS-associated genes. Required for full expression of genes that encode regulatory, secretion, and effector proteins of the T3SS. HrpA-mediated gene regulation apparently is through effect on the mRNA level of hrpR and hrpS. The chain is Hrp pili protein HrpA (hrpA) from Pseudomonas savastanoi pv. phaseolicola (Pseudomonas syringae pv. phaseolicola).